The primary structure comprises 68 residues: Large ribosomal subunit protein uL29c (68 aa).

Belongs to the universal ribosomal protein uL29 family.

Its subcellular location is the plastid. The protein resides in the chloroplast. The protein is Large ribosomal subunit protein uL29c of Pyropia yezoensis (Susabi-nori).